The following is a 109-amino-acid chain: Ycf20-like protein (109 aa).

This sequence belongs to the ycf20 family.

This Synechocystis sp. (strain ATCC 27184 / PCC 6803 / Kazusa) protein is Ycf20-like protein.